A 1033-amino-acid chain; its full sequence is DNA polymerase I A, chloroplastic (1033 aa).

Over residues 1 to 11 (MAVAPPLPPAP) the composition is skewed to pro residues. Disordered stretches follow at residues 1–32 (MAVA…LSSP) and 104–142 (TNGT…PSNS). Residues 1–55 (MAVAPPLPPAPARQLRRWKGSSPRPPPWLSSPFRRTRYLSRPAFAAGGRQDYSPS) constitute a chloroplast transit peptide. The segment covering 115 to 124 (LRHDPSEDIR) has biased composition (basic and acidic residues). The span at 125–142 (SSNYPSLYNQRERGPSNS) shows a compositional bias: polar residues. Residues 321–482 (FGNGKTCIWV…LYESLKNKLE (162 aa)) enclose the 3'-5' exonuclease domain. Positions 696-1030 (CHAIAALCEV…VDAKYAKSWY (335 aa)) are polymerase.

This sequence belongs to the DNA polymerase type-A family. In terms of tissue distribution, expressed in shoot apical meristem, root apical meristem, leaf primordia and the marginal meristem.

It localises to the plastid. The protein resides in the chloroplast. The catalysed reaction is DNA(n) + a 2'-deoxyribonucleoside 5'-triphosphate = DNA(n+1) + diphosphate. Inhibited by dideoxythymidine-triphosphate (ddTTP), but not by aphidicolin and N-ethylmaleimide. In addition to polymerase activity, this DNA polymerase exhibits 5'-3' exonuclease activity. May be required for DNA replication and accumulation in plastids. The sequence is that of DNA polymerase I A, chloroplastic from Oryza sativa subsp. japonica (Rice).